We begin with the raw amino-acid sequence, 400 residues long: Phosphoglycerate kinase (400 aa).

Residues 22–24 (DFN), Arg38, 61–64 (HLGR), Arg119, and Arg152 each bind substrate. Residues Lys205, Gly296, Glu327, and 353 to 356 (GGDT) contribute to the ATP site.

This sequence belongs to the phosphoglycerate kinase family. Monomer.

It localises to the cytoplasm. It carries out the reaction (2R)-3-phosphoglycerate + ATP = (2R)-3-phospho-glyceroyl phosphate + ADP. Its pathway is carbohydrate degradation; glycolysis; pyruvate from D-glyceraldehyde 3-phosphate: step 2/5. The protein is Phosphoglycerate kinase of Campylobacter jejuni subsp. jejuni serotype O:23/36 (strain 81-176).